Here is a 450-residue protein sequence, read N- to C-terminus: MMKANKIIKLFKGTVIHSIEIGKVEILPNSLIGIDEDGVIQHMKSNYEDLKQLEKDVTMICTDNGINEQESVIDMGNKFLIPGFIDTHAHAPQYHNAGTGTDLPLLKWLEKYTFPVESKFKDLIFAENVYGKVVDRMLRHGTTTCCYYATIHLEASELLAEIVSKRGQRAFIGKVCMDRHSPDHYVETTEQSISNTKEFVDRILAKGNPLVQPIVTPRFAPSCTDELMVALGNLSHEKQTLIQSHLSENKDEIEWVKSLYPGIESYTHVYKHFNLLNERTIMAHCVHLSDEEIKLISTQQTAISHCPISNFTLSSGNLDVRKVLEANIKLGLGSDISGGYHPSILQVIRDSIKCSNSHFFNNGNHTPLTFEEAFYLATVGGSKVVNLDHRIGNFIVGKDFDAQIIDPFVQNSPFDCFDGETLKDIFQKFIYLGDDRNLSSLYIKGNKIKF.

Histidine 88 and histidine 90 together coordinate Zn(2+). Residues 90–93 (HAPQ), 218–219 (RF), 245–248 (HLSE), and aspartate 335 contribute to the substrate site. Histidine 245 and aspartate 335 together coordinate Zn(2+).

It belongs to the metallo-dependent hydrolases superfamily. ATZ/TRZ family. Zn(2+) is required as a cofactor.

The enzyme catalyses guanine + H2O + H(+) = xanthine + NH4(+). Its pathway is purine metabolism; guanine degradation; xanthine from guanine: step 1/1. In terms of biological role, catalyzes the hydrolytic deamination of guanine, producing xanthine and ammonia. The sequence is that of Guanine deaminase (guaD) from Dictyostelium discoideum (Social amoeba).